The primary structure comprises 547 residues: Chaperonin GroEL (547 aa).

ATP contacts are provided by residues 30-33 (TLGP), K51, 87-91 (DGTTT), G415, and D496. The tract at residues 528–547 (KGGGAPAGGGMPGGMGDMDF) is disordered.

This sequence belongs to the chaperonin (HSP60) family. In terms of assembly, forms a cylinder of 14 subunits composed of two heptameric rings stacked back-to-back. Interacts with the co-chaperonin GroES.

The protein resides in the cytoplasm. It carries out the reaction ATP + H2O + a folded polypeptide = ADP + phosphate + an unfolded polypeptide.. In terms of biological role, together with its co-chaperonin GroES, plays an essential role in assisting protein folding. The GroEL-GroES system forms a nano-cage that allows encapsulation of the non-native substrate proteins and provides a physical environment optimized to promote and accelerate protein folding. This chain is Chaperonin GroEL, found in Caulobacter vibrioides (strain ATCC 19089 / CIP 103742 / CB 15) (Caulobacter crescentus).